The following is a 239-amino-acid chain: Leucyl/phenylalanyl-tRNA--protein transferase (239 aa).

It belongs to the L/F-transferase family.

The protein resides in the cytoplasm. It catalyses the reaction N-terminal L-lysyl-[protein] + L-leucyl-tRNA(Leu) = N-terminal L-leucyl-L-lysyl-[protein] + tRNA(Leu) + H(+). The catalysed reaction is N-terminal L-arginyl-[protein] + L-leucyl-tRNA(Leu) = N-terminal L-leucyl-L-arginyl-[protein] + tRNA(Leu) + H(+). The enzyme catalyses L-phenylalanyl-tRNA(Phe) + an N-terminal L-alpha-aminoacyl-[protein] = an N-terminal L-phenylalanyl-L-alpha-aminoacyl-[protein] + tRNA(Phe). Functionally, functions in the N-end rule pathway of protein degradation where it conjugates Leu, Phe and, less efficiently, Met from aminoacyl-tRNAs to the N-termini of proteins containing an N-terminal arginine or lysine. This is Leucyl/phenylalanyl-tRNA--protein transferase from Aliivibrio fischeri (strain ATCC 700601 / ES114) (Vibrio fischeri).